The sequence spans 162 residues: Probable cytosine deaminase (162 aa).

In terms of domain architecture, CMP/dCMP-type deaminase spans 8-132 (EKDLAYLREA…PLYINSRDIL (125 aa)). His59 lines the Zn(2+) pocket. Glu61 serves as the catalytic Proton donor. Cys87 and Cys90 together coordinate Zn(2+). A substrate-binding site is contributed by Asp159.

It belongs to the cytidine and deoxycytidylate deaminase family. As to quaternary structure, homodimer. Zn(2+) is required as a cofactor.

It is found in the cytoplasm. Its subcellular location is the nucleus. The enzyme catalyses cytosine + H2O + H(+) = uracil + NH4(+). The protein operates within pyrimidine metabolism; UMP biosynthesis via salvage pathway; uracil from cytosine: step 1/1. Functionally, catalyzes the hydrolytic deamination of cytosine to uracil or 5-methylcytosine to thymine. Is involved in the pyrimidine salvage pathway, which allows the cell to utilize cytosine for pyrimidine nucleotide synthesis. This is Probable cytosine deaminase from Schizosaccharomyces pombe (strain 972 / ATCC 24843) (Fission yeast).